A 362-amino-acid chain; its full sequence is Glutaminase-asparaginase (362 aa).

The N-terminal stretch at 1–25 (MNAALKTFAPSALALLLILPSSASA) is a signal peptide. The region spanning 35–362 (ANVVILATGG…KELQRIFWEY (328 aa)) is the Asparaginase/glutaminase domain. Residue T45 is the Acyl-ester intermediate of the active site. Substrate is bound by residues S92 and 125 to 126 (TD).

It belongs to the asparaginase 1 family. As to quaternary structure, homotetramer.

The protein localises to the periplasm. The catalysed reaction is L-glutamine + H2O = L-glutamate + NH4(+). It carries out the reaction L-asparagine + H2O = L-aspartate + NH4(+). The protein is Glutaminase-asparaginase (ansB) of Pseudomonas putida (strain ATCC 47054 / DSM 6125 / CFBP 8728 / NCIMB 11950 / KT2440).